A 286-amino-acid chain; its full sequence is Thiamine-monophosphate kinase (286 aa).

4 residues coordinate Mg(2+): aspartate 22, serine 36, threonine 37, and aspartate 38. Position 45 (aspartate 45) interacts with substrate. Mg(2+) is bound by residues aspartate 66 and aspartate 111. Residues 110–111 (GD) and arginine 136 contribute to the ATP site. Mg(2+) is bound at residue aspartate 191. Serine 193 is a binding site for ATP. Residue aspartate 194 participates in Mg(2+) binding. Tyrosine 282 provides a ligand contact to substrate.

It belongs to the thiamine-monophosphate kinase family.

It catalyses the reaction thiamine phosphate + ATP = thiamine diphosphate + ADP. It functions in the pathway cofactor biosynthesis; thiamine diphosphate biosynthesis; thiamine diphosphate from thiamine phosphate: step 1/1. Functionally, catalyzes the ATP-dependent phosphorylation of thiamine-monophosphate (TMP) to form thiamine-pyrophosphate (TPP), the active form of vitamin B1. The sequence is that of Thiamine-monophosphate kinase from Methanospirillum hungatei JF-1 (strain ATCC 27890 / DSM 864 / NBRC 100397 / JF-1).